The sequence spans 953 residues: ALS2 C-terminal-like protein (953 aa).

MORN repeat units lie at residues 358 to 380 (YEGE…DGRN), 381 to 403 (HVGD…QASE), 409 to 431 (YKCH…TSEV), 432 to 454 (YKGY…PQAP), 459 to 481 (YTGH…DRGE), 483 to 505 (YIGM…AGVC), 506 to 528 (YQGT…DDSL), and 529 to 552 (YEGT…NGFT). Residues 796-942 (LFPDARLLEF…IQKEDMRLHR (147 aa)) form the VPS9 domain.

As to quaternary structure, homodimer. Forms a heteromeric complex with ALS2. Interacts with ALS2 and RAB5A.

The protein resides in the cytoplasm. Functionally, acts as a guanine nucleotide exchange factor (GEF) for Rab5 GTPase. Regulates the ALS2-mediated endosome dynamics. The chain is ALS2 C-terminal-like protein (ALS2CL) from Bos taurus (Bovine).